A 139-amino-acid chain; its full sequence is ATP synthase epsilon chain (139 aa).

This sequence belongs to the ATPase epsilon chain family. F-type ATPases have 2 components, CF(1) - the catalytic core - and CF(0) - the membrane proton channel. CF(1) has five subunits: alpha(3), beta(3), gamma(1), delta(1), epsilon(1). CF(0) has three main subunits: a, b and c.

Its subcellular location is the cell inner membrane. Functionally, produces ATP from ADP in the presence of a proton gradient across the membrane. In Salmonella typhimurium (strain LT2 / SGSC1412 / ATCC 700720), this protein is ATP synthase epsilon chain.